A 193-amino-acid chain; its full sequence is Glycerol-3-phosphate acyltransferase (193 aa).

A run of 5 helical transmembrane segments spans residues 2 to 22, 51 to 71, 78 to 98, 112 to 132, and 154 to 174; these read AFII…AVIV, QAAF…VLIA, GVSL…PVYF, VLLG…VIVV, and IIAG…LLIW.

Belongs to the PlsY family. In terms of assembly, probably interacts with PlsX.

Its subcellular location is the cell inner membrane. It catalyses the reaction an acyl phosphate + sn-glycerol 3-phosphate = a 1-acyl-sn-glycero-3-phosphate + phosphate. It participates in lipid metabolism; phospholipid metabolism. Catalyzes the transfer of an acyl group from acyl-phosphate (acyl-PO(4)) to glycerol-3-phosphate (G3P) to form lysophosphatidic acid (LPA). This enzyme utilizes acyl-phosphate as fatty acyl donor, but not acyl-CoA or acyl-ACP. This chain is Glycerol-3-phosphate acyltransferase, found in Coxiella burnetii (strain CbuG_Q212) (Coxiella burnetii (strain Q212)).